Reading from the N-terminus, the 522-residue chain is E3 ubiquitin-protein ligase DMA2 (522 aa).

2 disordered regions span residues 1–56 (MYTP…RPAS) and 69–92 (QNSQ…PSNS). Low complexity predominate over residues 14–35 (APTSSMTSNSSSASNANTTSSS). Positions 36–49 (GINPRNRASGTPSN) are enriched in polar residues. S206 bears the Phosphoserine mark. Residues K211, K256, K258, K288, K310, K333, K343, K346, K366, K406, K412, and K423 each participate in a glycyl lysine isopeptide (Lys-Gly) (interchain with G-Cter in ubiquitin) cross-link. Positions 295–358 (LVIGRYTERV…SGTFLNHQRL (64 aa)) constitute an FHA domain. Residues 433–477 (CSICLCKIKPCQAIFISPCAHSWHFRCVRRLVMLSYPQFVCPNCR) form an RING-type zinc finger.

The protein belongs to the DMA1 family. UBC4-dependent autoubiquitination occurs at Lys-211, Lys-258, Lys-288, Lys-310, Lys-333, Lys-343, Lys-346, Lys-366, Lys-406, Lys-412 and Lys-423. UBC4-dependent autoubiquitination is responsible for DMA2 turnover. UBC13/MMS2-dependent autoubiquitination occurs at Lys-258, Lys-310, Lys-346 and Lys-366. Lys-211, Lys-256, Lys-288, Lys-310, Lys-343, Lys-258, Lys-366 and Lys-412 are also ubiquitinated in trans by DMA1 E3 ligase in association with UBC4.

The protein resides in the cytoplasm. The catalysed reaction is S-ubiquitinyl-[E2 ubiquitin-conjugating enzyme]-L-cysteine + [acceptor protein]-L-lysine = [E2 ubiquitin-conjugating enzyme]-L-cysteine + N(6)-ubiquitinyl-[acceptor protein]-L-lysine.. E3 ubiquitin-protein ligase which functions in cell cycle retarding in conjunction with the UBC4 and UBC13/MMS2 complex, 2 E2 ubiquitin conjugating enzymes. Involved in nutritional control of the cell cycle. Required for proper spindle positioning, likely regulating septin ring deposition at the bud neck. This chain is E3 ubiquitin-protein ligase DMA2 (DMA2), found in Saccharomyces cerevisiae (strain ATCC 204508 / S288c) (Baker's yeast).